The primary structure comprises 146 residues: Large ribosomal subunit protein uL15 (146 aa).

A disordered region spans residues 1-59; the sequence is MRLEELKAPAGANKRTKRVGRGTGSGHGKTSTRGHKGQKSRSGGGVRPGFEGGQMPLQR. Residues 30–39 show a composition bias toward basic residues; that stretch reads TSTRGHKGQK. The segment covering 42 to 52 has biased composition (gly residues); it reads SGGGVRPGFEG.

The protein belongs to the universal ribosomal protein uL15 family. Part of the 50S ribosomal subunit.

In terms of biological role, binds to the 23S rRNA. The polypeptide is Large ribosomal subunit protein uL15 (Syntrophomonas wolfei subsp. wolfei (strain DSM 2245B / Goettingen)).